The sequence spans 194 residues: NADPH-flavin oxidoreductase (194 aa).

It belongs to the non-flavoprotein flavin reductase family. In terms of assembly, homodimer. It can form an isobutylamine N-hydroxylase two component enzyme system formed of a flavin reductase component (VlmR) and a monooxygenase component (VlmH).

It carries out the reaction FADH2 + NADP(+) = FAD + NADPH + 2 H(+). The enzyme catalyses FMNH2 + NADP(+) = FMN + NADPH + 2 H(+). Its function is as follows. Involved in the biosynthesis of the azoxy antibiotic valanimycin, which has an antitumor activity. Catalyzes the reduction of FAD/FMN to FADH(2)/FMNH(2) which are subsequently used for the hydroxylation of isobutylamine by the isobutylamine N-hydroxylase VlmH. It can reduce either FAD or flavin mononucleotide (FMN) but prefers FAD. The enzyme has a strong preference for NADPH as acceptor. The sequence is that of NADPH-flavin oxidoreductase from Streptomyces viridifaciens.